The primary structure comprises 571 residues: Glutamate--tRNA ligase (571 aa).

The 'HIGH' region motif lies at 110 to 120; it reads PNPNGPGTLGS.

Belongs to the class-I aminoacyl-tRNA synthetase family. Glutamate--tRNA ligase type 2 subfamily.

The protein localises to the cytoplasm. It carries out the reaction tRNA(Glu) + L-glutamate + ATP = L-glutamyl-tRNA(Glu) + AMP + diphosphate. Catalyzes the attachment of glutamate to tRNA(Glu) in a two-step reaction: glutamate is first activated by ATP to form Glu-AMP and then transferred to the acceptor end of tRNA(Glu). This Methanosarcina acetivorans (strain ATCC 35395 / DSM 2834 / JCM 12185 / C2A) protein is Glutamate--tRNA ligase.